A 264-amino-acid polypeptide reads, in one-letter code: Phosphate import ATP-binding protein PstB 1 (264 aa).

The region spanning 20–259 (LETRDLNIFY…PKIKLTEDYI (240 aa)) is the ABC transporter domain. 52-59 (GASGSGKS) serves as a coordination point for ATP.

It belongs to the ABC transporter superfamily. Phosphate importer (TC 3.A.1.7) family. The complex is composed of two ATP-binding proteins (PstB), two transmembrane proteins (PstC and PstA) and a solute-binding protein (PstS).

Its subcellular location is the cell membrane. It catalyses the reaction phosphate(out) + ATP + H2O = ADP + 2 phosphate(in) + H(+). Part of the ABC transporter complex PstSACB involved in phosphate import. Responsible for energy coupling to the transport system. The protein is Phosphate import ATP-binding protein PstB 1 of Ligilactobacillus salivarius (strain UCC118) (Lactobacillus salivarius).